The primary structure comprises 176 residues: ATP-dependent protease subunit HslV (176 aa).

The active site involves Thr-5. 3 residues coordinate Na(+): Ala-161, Cys-164, and Thr-167.

Belongs to the peptidase T1B family. HslV subfamily. A double ring-shaped homohexamer of HslV is capped on each side by a ring-shaped HslU homohexamer. The assembly of the HslU/HslV complex is dependent on binding of ATP.

It localises to the cytoplasm. It catalyses the reaction ATP-dependent cleavage of peptide bonds with broad specificity.. Allosterically activated by HslU binding. Its function is as follows. Protease subunit of a proteasome-like degradation complex believed to be a general protein degrading machinery. In Pelotomaculum thermopropionicum (strain DSM 13744 / JCM 10971 / SI), this protein is ATP-dependent protease subunit HslV.